Here is a 72-residue protein sequence, read N- to C-terminus: MSQSVKRTAADKPLAPCPICGKPARTETKPFCSPRCADIDLGRWLGERYVIPGPEEEEMSYPPRSDDENRSR.

Zn(2+) contacts are provided by C17, C20, C32, and C36. Residues 51–72 are disordered; that stretch reads IPGPEEEEMSYPPRSDDENRSR.

Belongs to the DNA gyrase inhibitor YacG family. Interacts with GyrB. Zn(2+) serves as cofactor.

Functionally, inhibits all the catalytic activities of DNA gyrase by preventing its interaction with DNA. Acts by binding directly to the C-terminal domain of GyrB, which probably disrupts DNA binding by the gyrase. This Methylorubrum extorquens (strain PA1) (Methylobacterium extorquens) protein is DNA gyrase inhibitor YacG.